A 575-amino-acid chain; its full sequence is Septation ring formation regulator EzrA (575 aa).

Over M1–Y8 the chain is Extracellular. The chain crosses the membrane as a helical span at residues L9–L27. Topologically, residues R28–F575 are cytoplasmic. Coiled-coil stretches lie at residues L105–L191, L265–I301, V354–D416, and T456–A526.

Belongs to the EzrA family.

It is found in the cell membrane. Negative regulator of FtsZ ring formation; modulates the frequency and position of FtsZ ring formation. Inhibits FtsZ ring formation at polar sites. Interacts either with FtsZ or with one of its binding partners to promote depolymerization. The chain is Septation ring formation regulator EzrA from Streptococcus pneumoniae serotype 4 (strain ATCC BAA-334 / TIGR4).